The following is a 288-amino-acid chain: ATP synthase gamma chain (288 aa).

The protein belongs to the ATPase gamma chain family. F-type ATPases have 2 components, CF(1) - the catalytic core - and CF(0) - the membrane proton channel. CF(1) has five subunits: alpha(3), beta(3), gamma(1), delta(1), epsilon(1). CF(0) has three main subunits: a, b and c.

The protein resides in the cell inner membrane. Functionally, produces ATP from ADP in the presence of a proton gradient across the membrane. The gamma chain is believed to be important in regulating ATPase activity and the flow of protons through the CF(0) complex. This is ATP synthase gamma chain from Actinobacillus pleuropneumoniae serotype 5b (strain L20).